The following is a 295-amino-acid chain: Carbapenem-hydrolyzing beta-lactamase transcriptional activator (295 aa).

The 58-residue stretch at 5–62 (LPLNALRAFEASARYLNFTKAGLELHVSQAAVSQQVRTLEQMLGVALFTRVPRGLQLT) folds into the HTH lysR-type domain. Positions 22 to 41 (FTKAGLELHVSQAAVSQQVR) form a DNA-binding region, H-T-H motif.

It belongs to the LysR transcriptional regulatory family.

Its function is as follows. This protein is a positive regulator of gene expression of carbapenem-hydrolyzing beta-lactamase (NmcA). This is Carbapenem-hydrolyzing beta-lactamase transcriptional activator (nmcR) from Enterobacter cloacae.